A 301-amino-acid polypeptide reads, in one-letter code: Cytosolic sulfotransferase 2 (301 aa).

3'-phosphoadenylyl sulfate is bound at residue 53-58 (KAGTTW). The active-site Proton acceptor is the His115. 3'-phosphoadenylyl sulfate is bound by residues Arg137, Ser145, Tyr201, 235–240 (VQFDVM), and 263–265 (RKG).

Belongs to the sulfotransferase 1 family. Expressed in liver.

It is found in the cytoplasm. Inhibited by Co(2+), Zn(2+), Cd(2+) and Pb(2+) ions. Inactivated by Hg(2+) and Cu(2+) ions. Its function is as follows. Sulfotransferase that utilizes 3'-phospho-5'-adenylyl sulfate (PAPS) as sulfonate donor to catalyze the sulfate conjugation of a variety of xenobiotic and endogenous compounds, including 2-naphthol, hydroxychlorobiphenyls, T3 (triiodo-L-thyronine), T4 (thyroxine), estrone and DOPA. This chain is Cytosolic sulfotransferase 2, found in Danio rerio (Zebrafish).